A 99-amino-acid polypeptide reads, in one-letter code: Ubiquitin-related modifier 1 homolog 2 (99 aa).

G99 is modified (1-thioglycine). G99 participates in a covalent cross-link: Glycyl lysine isopeptide (Gly-Lys) (interchain with K-? in acceptor proteins).

The protein belongs to the URM1 family. Post-translationally, C-terminal thiocarboxylation occurs in 2 steps, it is first acyl-adenylated (-COAMP) via the hesA/moeB/thiF part of the MOCS3 homolog, then thiocarboxylated (-COSH) via the rhodanese domain of the MOCS3 homolog.

It localises to the cytoplasm. It functions in the pathway tRNA modification; 5-methoxycarbonylmethyl-2-thiouridine-tRNA biosynthesis. Its function is as follows. Acts as a sulfur carrier required for 2-thiolation of mcm(5)S(2)U at tRNA wobble positions of cytosolic tRNA(Lys), tRNA(Glu) and tRNA(Gln). Serves as sulfur donor in tRNA 2-thiolation reaction by being thiocarboxylated (-COSH) at its C-terminus by MOCS3. The sulfur is then transferred to tRNA to form 2-thiolation of mcm(5)S(2)U. Also acts as a ubiquitin-like protein (UBL) that is covalently conjugated via an isopeptide bond to lysine residues of target proteins. The thiocarboxylated form serves as substrate for conjugation and oxidative stress specifically induces the formation of UBL-protein conjugates. This is Ubiquitin-related modifier 1 homolog 2 from Arabidopsis thaliana (Mouse-ear cress).